Consider the following 352-residue polypeptide: Ion-translocating oxidoreductase complex subunit D (352 aa).

The next 4 membrane-spanning stretches (helical) occupy residues 20-40 (IMLLVLIAALPGIAAQTWFFG), 42-62 (GTLFQIVLAAITALVAEAIVL), 69-91 (VASHLQDYSALLTGLLLAVSIPP), and 123-143 (PAMIGYVVLLISFPVQMTSWL). FMN phosphoryl threonine is present on T187. Helical transmembrane passes span 215–235 (LAGVGWQWVNLAWLVGGVFLL), 242–262 (WHIPVSFLLTLALCAALGWLF), 267–287 (LASPQLHLLSGATMLGAFFIL), 301–321 (LIFGALAGVLVWLIRSFGGYP), and 322–342 (DGVAFAVLLANITVPLIDYYT).

Belongs to the NqrB/RnfD family. The complex is composed of six subunits: RsxA, RsxB, RsxC, RsxD, RsxE and RsxG. It depends on FMN as a cofactor.

The protein localises to the cell inner membrane. In terms of biological role, part of a membrane-bound complex that couples electron transfer with translocation of ions across the membrane. Required to maintain the reduced state of SoxR. The sequence is that of Ion-translocating oxidoreductase complex subunit D from Salmonella paratyphi B (strain ATCC BAA-1250 / SPB7).